Reading from the N-terminus, the 184-residue chain is Glutathione-regulated potassium-efflux system ancillary protein KefG (184 aa).

It belongs to the NAD(P)H dehydrogenase (quinone) family. KefG subfamily. As to quaternary structure, interacts with KefB.

The protein resides in the cell inner membrane. The enzyme catalyses a quinone + NADH + H(+) = a quinol + NAD(+). It carries out the reaction a quinone + NADPH + H(+) = a quinol + NADP(+). In terms of biological role, regulatory subunit of a potassium efflux system that confers protection against electrophiles. Required for full activity of KefB. This chain is Glutathione-regulated potassium-efflux system ancillary protein KefG, found in Escherichia coli O1:K1 / APEC.